The chain runs to 341 residues: Ketol-acid reductoisomerase (NADP(+)) (341 aa).

Residues 1–182 (MTEMFYDDDA…GGTRAGVIKT (182 aa)) enclose the KARI N-terminal Rossmann domain. Residues 25-28 (YGSQ), lysine 48, serine 51, serine 53, and 83-86 (DQHQ) contribute to the NADP(+) site. Histidine 108 is an active-site residue. Glycine 134 serves as a coordination point for NADP(+). One can recognise a KARI C-terminal knotted domain in the interval 183-328 (TFTEETETDL…RELRSLFSWQ (146 aa)). The Mg(2+) site is built by aspartate 191, glutamate 195, glutamate 227, and glutamate 231. Substrate is bound at residue serine 252.

The protein belongs to the ketol-acid reductoisomerase family. Mg(2+) is required as a cofactor.

The catalysed reaction is (2R)-2,3-dihydroxy-3-methylbutanoate + NADP(+) = (2S)-2-acetolactate + NADPH + H(+). It catalyses the reaction (2R,3R)-2,3-dihydroxy-3-methylpentanoate + NADP(+) = (S)-2-ethyl-2-hydroxy-3-oxobutanoate + NADPH + H(+). It participates in amino-acid biosynthesis; L-isoleucine biosynthesis; L-isoleucine from 2-oxobutanoate: step 2/4. Its pathway is amino-acid biosynthesis; L-valine biosynthesis; L-valine from pyruvate: step 2/4. Functionally, involved in the biosynthesis of branched-chain amino acids (BCAA). Catalyzes an alkyl-migration followed by a ketol-acid reduction of (S)-2-acetolactate (S2AL) to yield (R)-2,3-dihydroxy-isovalerate. In the isomerase reaction, S2AL is rearranged via a Mg-dependent methyl migration to produce 3-hydroxy-3-methyl-2-ketobutyrate (HMKB). In the reductase reaction, this 2-ketoacid undergoes a metal-dependent reduction by NADPH to yield (R)-2,3-dihydroxy-isovalerate. The polypeptide is Ketol-acid reductoisomerase (NADP(+)) (Pseudarthrobacter chlorophenolicus (strain ATCC 700700 / DSM 12829 / CIP 107037 / JCM 12360 / KCTC 9906 / NCIMB 13794 / A6) (Arthrobacter chlorophenolicus)).